The sequence spans 283 residues: Elongation factor Ts (283 aa).

The segment at 79 to 82 (TDFV) is involved in Mg(2+) ion dislocation from EF-Tu.

Belongs to the EF-Ts family.

The protein resides in the cytoplasm. In terms of biological role, associates with the EF-Tu.GDP complex and induces the exchange of GDP to GTP. It remains bound to the aminoacyl-tRNA.EF-Tu.GTP complex up to the GTP hydrolysis stage on the ribosome. This chain is Elongation factor Ts, found in Shewanella frigidimarina (strain NCIMB 400).